A 645-amino-acid chain; its full sequence is Protein disulfide-isomerase A4 (645 aa).

The signal sequence occupies residues 1–20; it reads MRPRKAFLLLLLLGLVQLLA. 2 consecutive Thioredoxin domains span residues 21 to 169 and 158 to 301; these read VAGA…EVSQ and EEIV…EFLK. The interval 24–58 is disordered; sequence AEGPDEDSSNRENAIEDEEEEEEEDDDEEEDDLEV. The segment covering 38–58 has biased composition (acidic residues); that stretch reads IEDEEEEEEEDDDEEEDDLEV. Positions 91-94 match the CXXC motif; the sequence is CGHC. Disulfide bonds link Cys91–Cys94 and Cys206–Cys209. Lys366 carries the N6-acetyllysine modification. A Thioredoxin 3 domain is found at 505 to 636; sequence FKKGKLKPVI…LSKFIEEHAT (132 aa). The CXXC motif lies at 555 to 558; it reads CGHC. Cysteines 555 and 558 form a disulfide. The Prevents secretion from ER motif lies at 642–645; that stretch reads KEEL.

This sequence belongs to the protein disulfide isomerase family. In terms of assembly, part of a large chaperone multiprotein complex comprising DNAJB11, HSP90B1, HSPA5, HYOU, PDIA2, PDIA4, PDIA6, PPIB, SDF2L1, UGGT1 and very small amounts of ERP29, but not, or at very low levels, CALR nor CANX. Component of a complex containing at least CRELD2, MANF, MATN3 and PDIA4. As to quaternary structure, (Microbial infection) Interacts with Human astrovirus-1 and Human astrovirus-8 spike protein VP25; this interaction seems to facilitate the uncoating during virus entry into the cell. Does not interact with Human astrovirus-2 spike protein VP25.

Its subcellular location is the endoplasmic reticulum lumen. The protein resides in the melanosome. It catalyses the reaction Catalyzes the rearrangement of -S-S- bonds in proteins.. This is Protein disulfide-isomerase A4 (PDIA4) from Homo sapiens (Human).